The sequence spans 88 residues: Small ribosomal subunit protein bS16 (88 aa).

It belongs to the bacterial ribosomal protein bS16 family.

This Syntrophomonas wolfei subsp. wolfei (strain DSM 2245B / Goettingen) protein is Small ribosomal subunit protein bS16.